Reading from the N-terminus, the 463-residue chain is tRNA (guanine(37)-N(1))-methyltransferase (463 aa).

Residues histidine 207, 245-246 (DL), 274-275 (DG), and asparagine 305 contribute to the S-adenosyl-L-methionine site.

Belongs to the class I-like SAM-binding methyltransferase superfamily. TRM5/TYW2 family. As to quaternary structure, monomer.

Its subcellular location is the mitochondrion matrix. It is found in the nucleus. The protein resides in the cytoplasm. It carries out the reaction guanosine(37) in tRNA + S-adenosyl-L-methionine = N(1)-methylguanosine(37) in tRNA + S-adenosyl-L-homocysteine + H(+). Specifically methylates the N1 position of guanosine-37 in various cytoplasmic and mitochondrial tRNAs. Methylation is not dependent on the nature of the nucleoside 5' of the target nucleoside. This is the first step in the biosynthesis of wybutosine (yW), a modified base adjacent to the anticodon of tRNAs and required for accurate decoding. The protein is tRNA (guanine(37)-N(1))-methyltransferase of Pediculus humanus subsp. corporis (Body louse).